A 341-amino-acid chain; its full sequence is S-adenosylmethionine:tRNA ribosyltransferase-isomerase (341 aa).

Belongs to the QueA family. As to quaternary structure, monomer.

The protein localises to the cytoplasm. The enzyme catalyses 7-aminomethyl-7-carbaguanosine(34) in tRNA + S-adenosyl-L-methionine = epoxyqueuosine(34) in tRNA + adenine + L-methionine + 2 H(+). It functions in the pathway tRNA modification; tRNA-queuosine biosynthesis. Transfers and isomerizes the ribose moiety from AdoMet to the 7-aminomethyl group of 7-deazaguanine (preQ1-tRNA) to give epoxyqueuosine (oQ-tRNA). This chain is S-adenosylmethionine:tRNA ribosyltransferase-isomerase, found in Chlorobium phaeobacteroides (strain DSM 266 / SMG 266 / 2430).